Consider the following 229-residue polypeptide: Peptidase E (229 aa).

Catalysis depends on charge relay system residues Ser-120, Asp-135, and His-157.

Belongs to the peptidase S51 family.

The protein localises to the cytoplasm. It catalyses the reaction Dipeptidase E catalyzes the hydrolysis of dipeptides Asp-|-Xaa. It does not act on peptides with N-terminal Glu, Asn or Gln, nor does it cleave isoaspartyl peptides.. Functionally, hydrolyzes dipeptides containing N-terminal aspartate residues. May play a role in allowing the cell to use peptide aspartate to spare carbon otherwise required for the synthesis of the aspartate family of amino acids. This is Peptidase E from Shigella boydii serotype 18 (strain CDC 3083-94 / BS512).